A 446-amino-acid chain; its full sequence is Histidine--tRNA ligase (446 aa).

This sequence belongs to the class-II aminoacyl-tRNA synthetase family. In terms of assembly, homodimer.

It localises to the cytoplasm. The enzyme catalyses tRNA(His) + L-histidine + ATP = L-histidyl-tRNA(His) + AMP + diphosphate + H(+). This Burkholderia cenocepacia (strain ATCC BAA-245 / DSM 16553 / LMG 16656 / NCTC 13227 / J2315 / CF5610) (Burkholderia cepacia (strain J2315)) protein is Histidine--tRNA ligase.